Here is a 444-residue protein sequence, read N- to C-terminus: Tubulin beta chain (444 aa).

Residues Gln-11, Glu-69, Ser-138, Gly-142, Thr-143, Gly-144, Asn-204, and Asn-226 each coordinate GTP. Position 69 (Glu-69) interacts with Mg(2+).

It belongs to the tubulin family. In terms of assembly, dimer of alpha and beta chains. A typical microtubule is a hollow water-filled tube with an outer diameter of 25 nm and an inner diameter of 15 nM. Alpha-beta heterodimers associate head-to-tail to form protofilaments running lengthwise along the microtubule wall with the beta-tubulin subunit facing the microtubule plus end conferring a structural polarity. Microtubules usually have 13 protofilaments but different protofilament numbers can be found in some organisms and specialized cells. The cofactor is Mg(2+).

It localises to the cytoplasm. It is found in the cytoskeleton. Its function is as follows. Tubulin is the major constituent of microtubules, a cylinder consisting of laterally associated linear protofilaments composed of alpha- and beta-tubulin heterodimers. Microtubules grow by the addition of GTP-tubulin dimers to the microtubule end, where a stabilizing cap forms. Below the cap, tubulin dimers are in GDP-bound state, owing to GTPase activity of alpha-tubulin. The sequence is that of Tubulin beta chain from Trichuris trichiura (Whipworm).